Reading from the N-terminus, the 324-residue chain is MEKKYYALAYYYITRVDNPHEEIALHKKFLEDLDVSCRIYISEQGINGQFSGYEPHAELYMQWLKERPNFSKIKFKIHHIKENIFPRITVKYRKELAALGCEVDLSKQAKHISPQEWHEKLQENRCLILDVRNNYEWKIGHFDNATLPDIQTFREFPEYAEKLAQECDPETTPVMMYCTGGIRCELYSPVLLEKGFKEVYQLDGGVIAYGQQVGTGKWLGKLFVFDDRLAIPIDESDPDVAPIAECCHCQTPSDAYYNCANTDCNALFLCCDECIHQHQGCCGEECSQSPRVRKFDSSRGNKPFRRAHLCEISENSESASCCLI.

The Rhodanese domain occupies 122 to 218 (QENRCLILDV…YGQQVGTGKW (97 aa)). The active-site Cysteine persulfide intermediate is cysteine 178.

Belongs to the TrhO family.

It catalyses the reaction uridine(34) in tRNA + AH2 + O2 = 5-hydroxyuridine(34) in tRNA + A + H2O. Its function is as follows. Catalyzes oxygen-dependent 5-hydroxyuridine (ho5U) modification at position 34 in tRNAs. The polypeptide is tRNA uridine(34) hydroxylase (Chlamydia pneumoniae (Chlamydophila pneumoniae)).